A 652-amino-acid chain; its full sequence is Drebrin (652 aa).

The residue at position 2 (Ala2) is an N-acetylalanine. Positions 5-134 (GFAAHRLELL…DPGAIGQRLS (130 aa)) constitute an ADF-H domain. 2 stretches are compositionally biased toward basic and acidic residues: residues 211 to 236 (MEQERLEQEERERRYREREEQIEEHR) and 288 to 298 (DNPREFFKQQE). Disordered regions lie at residues 211-350 (MEQE…YITC) and 371-652 (SAAG…GGGL). The segment covering 328-340 (SGPPSSSSSSSSP) has biased composition (low complexity). A compositionally biased stretch (pro residues) spans 507–517 (PDTPAGPPVPP). 2 stretches are compositionally biased toward acidic residues: residues 540–554 (QHEEVEEEEEEEEAT) and 640–652 (PLPEEEESFGGGL).

Brain neurons.

The protein localises to the cytoplasm. The protein resides in the cell projection. It is found in the dendrite. Its subcellular location is the cell cortex. It localises to the cell junction. The protein localises to the growth cone. Functionally, actin cytoskeleton-organizing protein that plays a role in the formation of cell projections. Plays a role in dendritic spine morphogenesis and organization, including the localization of the dopamine receptor DRD1 to the dendritic spines. Involved in synaptic plasticity. The polypeptide is Drebrin (DBN1) (Gallus gallus (Chicken)).